The sequence spans 456 residues: Signal recognition particle receptor FtsY (456 aa).

A compositionally biased stretch (basic and acidic residues) spans Met1–Ala26. The interval Met1 to Arg163 is disordered. Over residues Ala27–Ala39 the composition is skewed to acidic residues. Low complexity predominate over residues Glu40–Asp62. The span at Pro63–Asp81 shows a compositional bias: acidic residues. Residues Ala82–Glu97 show a composition bias toward low complexity. Residues Pro112–Glu134 are compositionally biased toward acidic residues. Residues Gly265–Thr272, Asp347–Arg351, and Thr405–Asp408 each bind GTP.

It belongs to the GTP-binding SRP family. FtsY subfamily. As to quaternary structure, part of the signal recognition particle protein translocation system, which is composed of SRP and FtsY.

It is found in the cell membrane. The protein localises to the cytoplasm. It catalyses the reaction GTP + H2O = GDP + phosphate + H(+). Functionally, involved in targeting and insertion of nascent membrane proteins into the cytoplasmic membrane. Acts as a receptor for the complex formed by the signal recognition particle (SRP) and the ribosome-nascent chain (RNC). In Haloferax volcanii (strain ATCC 29605 / DSM 3757 / JCM 8879 / NBRC 14742 / NCIMB 2012 / VKM B-1768 / DS2) (Halobacterium volcanii), this protein is Signal recognition particle receptor FtsY.